Consider the following 959-residue polypeptide: ATP-dependent 6-phosphofructokinase subunit beta (959 aa).

Residues 2 to 573 (TVTTPFVNGT…HLNNFMAINS (572 aa)) are N-terminal catalytic PFK domain 1. The segment at 144-167 (KNAVSTKPTPPPAPEASAESGLSS) is disordered. Threonine 152 carries the phosphothreonine modification. Positions 158–167 (EASAESGLSS) are enriched in low complexity. Serine 163 and serine 171 each carry phosphoserine. ATP is bound by residues glycine 206, 270 to 271 (RC), and 300 to 303 (GDGS). Aspartate 301 is a binding site for Mg(2+). Beta-D-fructose 6-phosphate is bound by residues 346–348 (SID), arginine 383, 390–392 (MGR), glutamate 447, arginine 475, and 481–484 (HVQR). Catalysis depends on aspartate 348, which acts as the Proton acceptor. The segment at 574-587 (ADHNEPKLPKDKRL) is interdomain linker. Residues 588–959 (KIAIVNVGAP…DHLVGRKRVD (372 aa)) are C-terminal regulatory PFK domain 2. Residues arginine 658, 716-720 (TLSNN), arginine 754, and 761-763 (QGG) contribute to the beta-D-fructose 2,6-bisphosphate site. Position 803 is a phosphoserine (serine 803). Beta-D-fructose 2,6-bisphosphate contacts are provided by residues lysine 847, 853 to 856 (HVQQ), and arginine 935.

It belongs to the phosphofructokinase type A (PFKA) family. ATP-dependent PFK group I subfamily. Eukaryotic two domain clade 'E' sub-subfamily. In terms of assembly, heterooctamer of 4 alpha and 4 beta chains. Mg(2+) is required as a cofactor.

The protein resides in the cytoplasm. Its subcellular location is the mitochondrion outer membrane. The enzyme catalyses beta-D-fructose 6-phosphate + ATP = beta-D-fructose 1,6-bisphosphate + ADP + H(+). It functions in the pathway carbohydrate degradation; glycolysis; D-glyceraldehyde 3-phosphate and glycerone phosphate from D-glucose: step 3/4. Its activity is regulated as follows. Allosterically activated by ADP, AMP, or fructose 2,6-bisphosphate, and allosterically inhibited by ATP or citrate. Catalyzes the phosphorylation of D-fructose 6-phosphate to fructose 1,6-bisphosphate by ATP, the first committing step of glycolysis. The chain is ATP-dependent 6-phosphofructokinase subunit beta (PFK2) from Saccharomyces cerevisiae (strain ATCC 204508 / S288c) (Baker's yeast).